Here is a 121-residue protein sequence, read N- to C-terminus: MARVKRGVTSHAKHKKVLKAAKGYYGRRKNTIRIAKQAVEKGLQYAYRDRKNKKRTFRALWIQRLNAAVREHGLTYSRFINALAQSGIEVDRKALSELAIHEPAAFAAVVEKAKSALPKAA.

This sequence belongs to the bacterial ribosomal protein bL20 family.

In terms of biological role, binds directly to 23S ribosomal RNA and is necessary for the in vitro assembly process of the 50S ribosomal subunit. It is not involved in the protein synthesizing functions of that subunit. This is Large ribosomal subunit protein bL20 from Methylorubrum extorquens (strain PA1) (Methylobacterium extorquens).